Here is a 452-residue protein sequence, read N- to C-terminus: NADH-quinone oxidoreductase subunit N 2 (452 aa).

14 helical membrane passes run 6 to 26, 33 to 53, 70 to 90, 97 to 117, 120 to 140, 154 to 174, 194 to 214, 232 to 252, 258 to 278, 286 to 306, 311 to 331, 355 to 375, 387 to 407, and 432 to 452; these read VLIPEISLLILAIISFFYGFI, TYILSFLSILTAIILSVFNFG, TLRILVLFIGVFIIGLSYSDL, SVEYVFLLLLSLFGMNLMIVA, LLILYLALETFSLSLYILAGF, YFILGTLSSIILLGSIVFFYA, ILLGVVFLISAFAFKLSLAPF, FLSTAPKVAVFGALINIFLSI, IQDLIVIISALSMLVGNVLAL, MLAYSSIAHAGYMFMAFLLPE, ISLIPYLIVYVFMNLSAFAFI, FCIIVIMFSLTGVPPTAGFIV, GYGSLVFFALLMSIFSAFYYL, and ALSGALLLIFLGLFPNLLLIF.

This sequence belongs to the complex I subunit 2 family. In terms of assembly, NDH-1 is composed of 14 different subunits. Subunits NuoA, H, J, K, L, M, N constitute the membrane sector of the complex.

The protein resides in the cell inner membrane. It catalyses the reaction a quinone + NADH + 5 H(+)(in) = a quinol + NAD(+) + 4 H(+)(out). In terms of biological role, NDH-1 shuttles electrons from NADH, via FMN and iron-sulfur (Fe-S) centers, to quinones in the respiratory chain. The immediate electron acceptor for the enzyme in this species is believed to be ubiquinone. Couples the redox reaction to proton translocation (for every two electrons transferred, four hydrogen ions are translocated across the cytoplasmic membrane), and thus conserves the redox energy in a proton gradient. The chain is NADH-quinone oxidoreductase subunit N 2 from Thermodesulfovibrio yellowstonii (strain ATCC 51303 / DSM 11347 / YP87).